Here is a 41-residue protein sequence, read N- to C-terminus: Plantazolicin (41 aa).

Positions 1 to 27 (MTQIKVPTALIASVHGEGQHLFEPMAA) are excised as a propeptide. Arg28 is subject to N2,N2-dimethylarginine. Positions 28 to 29 (RC) form a cross-link, thiazole-4-carboxylic acid (Arg-Cys). Cross-links (5-methyloxazole-4-carboxylic acid (Cys-Thr)) lie at residues 29 to 30 (CT) and 31 to 32 (CT). A cross-link (thiazole-4-carboxylic acid (Thr-Cys)) is located at residues 30 to 31 (TC). Residues 32–33 (TT) constitute a cross-link (5-methyloxazole-4-carboxylic acid (Thr-Thr)). The segment at residues 35 to 36 (IS) is a cross-link (oxazole-4-carboxylic acid (Ile-Ser)). 3 consecutive cross-links (oxazole-4-carboxylic acid (Ser-Ser)) follow at residues 36-37 (SS), 37-38 (SS), and 38-39 (SS). The 5-methyloxazoline-4-carboxylic acid (Ser-Thr) cross-link spans 39-40 (ST).

In terms of processing, maturation of thiazole and oxazole containing antibiotics involves the enzymatic condensation of a Cys, Ser or Thr with the alpha-carbonyl of the preceding amino acid to form a thioether or ether bond, then dehydration to form a double bond with the alpha-amino nitrogen. Thiazoline or oxazoline ring are dehydrogenated to form thiazole or oxazole rings. 2 forms exist: plantazolicin A and plantazolicin B. The structural difference between them is a dimethylation at Arg-28 in plantazolicin A.

The protein localises to the secreted. The protein resides in the cell wall. Functionally, peptide antibiotic inhibiting growth of Gram-positive bacteria in the dimethylated form plantazolicin A. The desmethyl form plantazolicin B has no antibiotic activity. The mode of action appears to be disruption of cell walls and lysis of cells. Inhibits B.subtilis strain HB0042, B.megaterium strain 7A1 and B.anthracis (MIC=2-4 ug/ml). Weakly inhibits Gram-positive bacteria B.brevis strain ATCC 8246, B.subtilis strain 168, B.cereus strain ATCC 14579 and strain CU1065, B.licheniformis strain ATCC 9789, M.luteus, B.sphaericus, P.granivorans and S.pyogenes (MIC=128 ug/ml). Does not inhibit B.pumilus, P.polymyxa, Arthrobacter sp., S.aureus, vancomycin-resistant E.faecalis, L.monocytogenes, methicillin-resistant S.aureus or Gram-negative bacteria E.coli strain K12, K.terrigena, Pseudomonas sp. and E.carotovora. This Bacillus velezensis (strain DSM 23117 / BGSC 10A6 / LMG 26770 / FZB42) (Bacillus amyloliquefaciens subsp. plantarum) protein is Plantazolicin.